The chain runs to 246 residues: 14-3-3 protein beta/alpha (246 aa).

N-acetylmethionine is present on M1. Residue T2 is modified to N-acetylthreonine; in 14-3-3 protein beta/alpha, N-terminally processed. Residue T2 is modified to Phosphothreonine. Position 5 is an N6-acetyllysine (K5). An N6-acetyllysine; alternate modification is found at K51. Residue K51 forms a Glycyl lysine isopeptide (Lys-Gly) (interchain with G-Cter in SUMO2); alternate linkage. At S60 the chain carries Phosphoserine. The residue at position 70 (K70) is an N6-acetyllysine. 3'-nitrotyrosine is present on residues Y84 and Y106. K117 bears the N6-acetyllysine mark. Residues S186 and S232 each carry the phosphoserine modification.

It belongs to the 14-3-3 family. As to quaternary structure, homodimer. Interacts with SAMSN1 and PRKCE. Interacts with AKAP13. Interacts with SSH1 and TORC2/CRTC2. Interacts with ABL1; the interaction results in cytoplasmic location of ABL1 and inhibition of cABL-mediated apoptosis. Interacts with ROR2 (dimer); the interaction results in phosphorylation of YWHAB on tyrosine residues. Interacts with GAB2. Interacts with YAP1 (phosphorylated form). Interacts with the phosphorylated (by AKT1) form of SRPK2. Interacts with PKA-phosphorylated AANAT. Interacts with MYO1C. Interacts with SIRT2. Interacts with the 'Thr-369' phosphorylated form of DAPK2. Interacts with PI4KB, TBC1D22A and TBC1D22B. Interacts with the 'Ser-1134' and 'Ser-1161' phosphorylated form of SOS1. Interacts (via phosphorylated form) with YWHAB; this interaction occurs in a protein kinase AKT1-dependent manner. Interacts with SLITRK1. Interacts with SYNPO2 (phosphorylated form); YWHAB competes with ACTN2 for interaction with SYNPO2. Interacts with RIPOR2 (via phosphorylated form); this interaction occurs in a chemokine-dependent manner and does not compete for binding of RIPOR2 with RHOA nor blocks inhibition of RIPOR2-mediated RHOA activity. Interacts with MARK2 and MARK3. Interacts with TESK1; the interaction is dependent on the phosphorylation of TESK1 'Ser-439' and inhibits TESK1 kinase activity. Interacts with MEFV. Interacts with HDAC4. Interacts with ADAM22 (via C-terminus). Post-translationally, the alpha, brain-specific form differs from the beta form in being phosphorylated. Phosphorylated on Ser-60 by protein kinase C delta type catalytic subunit in a sphingosine-dependent fashion.

It localises to the cytoplasm. The protein resides in the melanosome. Its function is as follows. Adapter protein implicated in the regulation of a large spectrum of both general and specialized signaling pathways. Binds to a large number of partners, usually by recognition of a phosphoserine or phosphothreonine motif. Binding generally results in the modulation of the activity of the binding partner. Negative regulator of osteogenesis. Blocks the nuclear translocation of the phosphorylated form (by AKT1) of SRPK2 and antagonizes its stimulatory effect on cyclin D1 expression resulting in blockage of neuronal apoptosis elicited by SRPK2. Negative regulator of signaling cascades that mediate activation of MAP kinases via AKAP13. This is 14-3-3 protein beta/alpha (YWHAB) from Bos taurus (Bovine).